An 876-amino-acid chain; its full sequence is Valine--tRNA ligase (876 aa).

The 'HIGH' region signature appears at 43–53 (PNVTGVLHMGH). The short motif at 532-536 (KMSKS) is the 'KMSKS' region element. ATP is bound at residue Lys-535. 2 coiled-coil regions span residues 805-826 (GNMI…HKEG) and 853-875 (RKKQ…SLKN).

This sequence belongs to the class-I aminoacyl-tRNA synthetase family. ValS type 1 subfamily. Monomer.

The protein resides in the cytoplasm. It catalyses the reaction tRNA(Val) + L-valine + ATP = L-valyl-tRNA(Val) + AMP + diphosphate. Its function is as follows. Catalyzes the attachment of valine to tRNA(Val). As ValRS can inadvertently accommodate and process structurally similar amino acids such as threonine, to avoid such errors, it has a 'posttransfer' editing activity that hydrolyzes mischarged Thr-tRNA(Val) in a tRNA-dependent manner. This is Valine--tRNA ligase from Bacteroides fragilis (strain ATCC 25285 / DSM 2151 / CCUG 4856 / JCM 11019 / LMG 10263 / NCTC 9343 / Onslow / VPI 2553 / EN-2).